The primary structure comprises 318 residues: MFMINVLSLIIPILLAVAFLTLVERKVLGYMQLRKGPNVVGPYGLLQPIADAVKLFTKEPLRPLTSSMLMFIMAPILALTLALTMWIPLPMPYPLINMNLGVLFMLAMSSLAVYSILWSGWASNSKYALIGALRAVAQTISYEVTLAIILLSVLLMNGSFTLAMLITTQEYMWLIIPAWPLAMMWFISTLAETNRAPFDLTEGESELVSGFDVEYAAGPFALFFLAEYANIIMMNILTTILFFGAFHSPYMPELYTINFTVKTLLLTTTFLWIRASYPRFRYDQLMHLLWKNFLPLTLALCMWHVSLPIITASIPPQT.

8 helical membrane passes run 2 to 22 (FMINVLSLIIPILLAVAFLTL), 69 to 89 (LMFIMAPILALTLALTMWIPL), 100 to 120 (LGVLFMLAMSSLAVYSILWSG), 146 to 166 (LAIILLSVLLMNGSFTLAMLI), 171 to 191 (YMWLIIPAWPLAMMWFISTLA), 223 to 243 (FFLAEYANIIMMNILTTILFF), 253 to 273 (ELYTINFTVKTLLLTTTFLWI), and 294 to 314 (LPLTLALCMWHVSLPIITASI).

Belongs to the complex I subunit 1 family. As to quaternary structure, core subunit of respiratory chain NADH dehydrogenase (Complex I) which is composed of 45 different subunits.

Its subcellular location is the mitochondrion inner membrane. It catalyses the reaction a ubiquinone + NADH + 5 H(+)(in) = a ubiquinol + NAD(+) + 4 H(+)(out). Functionally, core subunit of the mitochondrial membrane respiratory chain NADH dehydrogenase (Complex I) which catalyzes electron transfer from NADH through the respiratory chain, using ubiquinone as an electron acceptor. Essential for the catalytic activity and assembly of complex I. This Felis catus (Cat) protein is NADH-ubiquinone oxidoreductase chain 1 (MT-ND1).